The following is a 141-amino-acid chain: Nucleoside diphosphate kinase (141 aa).

Residues Lys-11, Phe-59, Arg-87, Thr-93, Arg-104, and Asn-114 each coordinate ATP. His-117 (pros-phosphohistidine intermediate) is an active-site residue.

Belongs to the NDK family. As to quaternary structure, homotetramer. Requires Mg(2+) as cofactor.

The protein resides in the cytoplasm. The enzyme catalyses a 2'-deoxyribonucleoside 5'-diphosphate + ATP = a 2'-deoxyribonucleoside 5'-triphosphate + ADP. It catalyses the reaction a ribonucleoside 5'-diphosphate + ATP = a ribonucleoside 5'-triphosphate + ADP. In terms of biological role, major role in the synthesis of nucleoside triphosphates other than ATP. The ATP gamma phosphate is transferred to the NDP beta phosphate via a ping-pong mechanism, using a phosphorylated active-site intermediate. The polypeptide is Nucleoside diphosphate kinase (Actinobacillus succinogenes (strain ATCC 55618 / DSM 22257 / CCUG 43843 / 130Z)).